A 575-amino-acid polypeptide reads, in one-letter code: Triokinase/FMN cyclase (575 aa).

In terms of domain architecture, DhaK spans 9-336; sequence SVAGCADDAL…IDAETTAAAW (328 aa). Residues 56–59, K109, and D114 contribute to the dihydroxyacetone site; that span reads GSGH. The active-site Tele-hemiaminal-histidine intermediate is the H221. The interval 348-367 is disordered; it reads KRSRVAPAEPQEAPDSTAAG. A Phosphoserine modification is found at S350. The DhaL domain occupies 372 to 571; sequence KRMALVLERV…AAAILRAILE (200 aa). ATP contacts are provided by residues 401-404, 446-447, G486, and 494-495; these read DGDC, SS, and TM. Phosphoserine occurs at positions 511 and 545. Residue 556–558 participates in ATP binding; sequence DPG.

It belongs to the dihydroxyacetone kinase (DAK) family. Homodimer. Interacts with IFIH1 (via the CARD domains), the interaction is inhibited by viral infection. Mg(2+) serves as cofactor. Requires Mn(2+) as cofactor. Co(2+) is required as a cofactor. Detected in erythrocytes (at protein level).

The catalysed reaction is dihydroxyacetone + ATP = dihydroxyacetone phosphate + ADP + H(+). It catalyses the reaction D-glyceraldehyde + ATP = D-glyceraldehyde 3-phosphate + ADP + H(+). The enzyme catalyses FAD = riboflavin cyclic-4',5'-phosphate + AMP + H(+). With respect to regulation, each activity is inhibited by the substrate(s) of the other. Catalyzes both the phosphorylation of dihydroxyacetone and of glyceraldehyde, and the splitting of ribonucleoside diphosphate-X compounds among which FAD is the best substrate. Represses IFIH1-mediated cellular antiviral response. This Homo sapiens (Human) protein is Triokinase/FMN cyclase.